A 122-amino-acid polypeptide reads, in one-letter code: Large ribosomal subunit protein uL14 (122 aa).

This sequence belongs to the universal ribosomal protein uL14 family. As to quaternary structure, part of the 50S ribosomal subunit. Forms a cluster with proteins L3 and L19. In the 70S ribosome, L14 and L19 interact and together make contacts with the 16S rRNA in bridges B5 and B8.

Functionally, binds to 23S rRNA. Forms part of two intersubunit bridges in the 70S ribosome. This chain is Large ribosomal subunit protein uL14, found in Rhodococcus erythropolis (strain PR4 / NBRC 100887).